A 66-amino-acid polypeptide reads, in one-letter code: Large ribosomal subunit protein bL31 (66 aa).

Cys16, Cys18, Cys36, and Cys39 together coordinate Zn(2+).

This sequence belongs to the bacterial ribosomal protein bL31 family. Type A subfamily. Part of the 50S ribosomal subunit. Requires Zn(2+) as cofactor.

In terms of biological role, binds the 23S rRNA. The chain is Large ribosomal subunit protein bL31 from Moorella thermoacetica (strain ATCC 39073 / JCM 9320).